A 168-amino-acid polypeptide reads, in one-letter code: Photosystem I assembly protein Ycf3 (168 aa).

3 TPR repeats span residues 35–68 (AFAY…EMDP), 72–105 (SYIL…NPFL), and 120–153 (GEQA…TPGN).

The protein belongs to the Ycf3 family.

It is found in the plastid membrane. Functionally, essential for the assembly of the photosystem I (PSI) complex. May act as a chaperone-like factor to guide the assembly of the PSI subunits. This chain is Photosystem I assembly protein Ycf3, found in Cuscuta gronovii (Common dodder).